The primary structure comprises 1147 residues: Protein lin-41 (1147 aa).

The interval 1–93 (MATIVPCSLE…PPSMIQSPQQ (93 aa)) is disordered. A compositionally biased stretch (low complexity) spans 33-47 (SGNELSMGGSSSEGD). Basic and acidic residues predominate over residues 48 to 65 (SMSHHRGEHSPNHHHQDN). Over residues 84–93 (PPSMIQSPQQ) the composition is skewed to low complexity. The RING-type zinc-finger motif lies at 114 to 155 (CSVCSKSSTIGVLPFVCAHKTCQSCYQMTPSSYDRRACKLCG). A B box-type; atypical zinc finger spans residues 366-412 (MGPIQCQGCESKISFAYCMQCQEALCIHCVQAHQRVRATKQHAFVEL). Zn(2+) is bound by residues Cys-371, Cys-374, Cys-394, and His-398. A coiled-coil region spans residues 565–618 (AFDTHVNALEERRKELLKRVETVKNLKLSVLISQAESLQSKQIDLQQAIQTATK). Residues 723–817 (ACGDLLSSSI…ISGCPTTMDI (95 aa)) form a Filamin repeat. 6 NHL repeats span residues 832–875 (ILTF…FDKD), 879–922 (ISKF…FDEN), 926–969 (LLKF…FTPQ), 974–1017 (RKCG…LSPR), 1022–1065 (MKVY…FASD), and 1107–1147 (SAPT…IRVF). The disordered stretch occupies residues 1104–1123 (AFSSAPTPLTPSPRQLLDRP).

It belongs to the TRIM/RBCC family.

It localises to the cytoplasm. It is found in the P-body. Its function is as follows. Heterochronic protein which acts downstream of let-7 in temporal patterning. Plays a role in the developmental timing of postembryonic hypodermal seam cell division and fusion events and adult alae production. Represses lin-29 during late larval stages, which prevents terminal differentiation of hypodermal seam cells and promotes their division. Involved in post-transcriptional gene regulation, uses two independent pathways. Has direct and specific RNA-binding activity and, depending on the location (5'UTR or 3'UTR) of the target site, triggers either mRNA decay or repression of translation. Degrades the mRNA of transcription factor dmd-3 to govern the timing and extent of male tail tip morphogenesis. Plays a role in the sexual maturation of the nervous system. The chain is Protein lin-41 from Caenorhabditis elegans.